A 749-amino-acid polypeptide reads, in one-letter code: Catalase-peroxidase 2 (749 aa).

An N-terminal signal peptide occupies residues 1–27 (MFKRTIPLFAAFTLAISPSIFPNYAHA). The tryptophyl-tyrosyl-methioninium (Trp-Tyr) (with M-255) cross-link spans 107–229 (WHAAGTYRIY…LAATVMGLIY (123 aa)). The Proton acceptor role is filled by histidine 108. Positions 229–255 (YVNPEGPNGVPDPLAAAEKIRETFGRM) form a cross-link, tryptophyl-tyrosyl-methioninium (Tyr-Met) (with W-107). Histidine 270 contributes to the heme b binding site.

Belongs to the peroxidase family. Peroxidase/catalase subfamily. Homodimer or homotetramer. The cofactor is heme b. In terms of processing, formation of the three residue Trp-Tyr-Met cross-link is important for the catalase, but not the peroxidase activity of the enzyme.

It carries out the reaction H2O2 + AH2 = A + 2 H2O. It catalyses the reaction 2 H2O2 = O2 + 2 H2O. In terms of biological role, bifunctional enzyme with both catalase and broad-spectrum peroxidase activity. This chain is Catalase-peroxidase 2, found in Legionella pneumophila subsp. pneumophila (strain Philadelphia 1 / ATCC 33152 / DSM 7513).